A 361-amino-acid polypeptide reads, in one-letter code: MKFGWIKTTGNDLEERMESVKDALESSIPGIIAEKEEISSVRELGNIKIVSDNLDADVVLINKGEDLEILKSAKLSGKETGVYVVINTKEDEVYATDVSKLDFVDYVVLEGSDWTIIPLENIIADLFSEEIKIVSVVTNVKDAEAAYEILEKGVDGVVLIPKDINEVKDFSKLIERMNSESVKLDYATVTKIEPVGSGDRVCIDTCSMMEMGEGMLIGSYSRGMFLVHSETVENPYVATRPFRVNAGPVHAYILCPENKTKYLSDLKAGDKVLVVNKNGETREAIIGRVKIEKRPLFLVEAEYNGENLRTILQNAETIRLVGEDGKPVSVVDLKVGTKVLIKPDENARHFGMAIKETIIEK.

It belongs to the archaeal-type DHQ synthase family.

It carries out the reaction 2-amino-2,3,7-trideoxy-D-lyxo-hept-6-ulosonate + NAD(+) + H2O = 3-dehydroquinate + NH4(+) + NADH + H(+). Its function is as follows. Catalyzes the oxidative deamination and cyclization of 2-amino-3,7-dideoxy-D-threo-hept-6-ulosonic acid (ADH) to yield 3-dehydroquinate (DHQ), which is fed into the canonical shikimic pathway of aromatic amino acid biosynthesis. This chain is 3-dehydroquinate synthase, found in Methanococcus maripaludis (strain DSM 14266 / JCM 13030 / NBRC 101832 / S2 / LL).